We begin with the raw amino-acid sequence, 2028 residues long: Pecanex-like protein 3 (2028 aa).

Transmembrane regions (helical) follow at residues C33 to L53 and P54 to I74. A glycan (N-linked (GlcNAc...) asparagine) is linked at N95. The disordered stretch occupies residues S96 to P116. S127 is subject to Phosphoserine. T129 carries the post-translational modification Phosphothreonine. 2 disordered regions span residues I193–P239 and L263–R625. Pro residues predominate over residues Q198–S208. 2 stretches are compositionally biased toward basic and acidic residues: residues L263 to C273 and T305 to N319. N319 is a glycosylation site (N-linked (GlcNAc...) asparagine). The residue at position 370 (T370) is a Phosphothreonine. A phosphoserine mark is found at S392 and S431. Over residues G427 to R437 the composition is skewed to polar residues. Residues T444–Q459 are compositionally biased toward low complexity. The span at T488–A497 shows a compositional bias: polar residues. Phosphoserine is present on residues S505 and S521. Helical transmembrane passes span N793–F815, I819–L836, W852–L872, P880–A900, V903–V923, S946–C968, and H980–S1000. Phosphoserine is present on S1025. A run of 4 helical transmembrane segments spans residues L1053–I1073, V1078–L1098, F1244–A1264, and L1280–M1300. The residue at position 1697 (S1697) is a Phosphoserine. N1770 carries N-linked (GlcNAc...) asparagine glycosylation. A disordered region spans residues G1845–Y2028. The segment covering R1890–P1921 has biased composition (pro residues). Residues S1909 and S1955 each carry the phosphoserine modification. Low complexity predominate over residues P1966–S1977. Positions E1978 to D1987 are enriched in polar residues.

Belongs to the pecanex family.

It localises to the membrane. The polypeptide is Pecanex-like protein 3 (Mus musculus (Mouse)).